The chain runs to 412 residues: Polyferredoxin protein MvhB (412 aa).

4Fe-4S ferredoxin-type domains follow at residues 2–29 (IVIN…VKPE), 30–57 (DVIY…HEDI), 66–95 (KKIT…LVND), 96–127 (GKAS…IEGV), 138–166 (DKPI…LPKY), 168–197 (ESIE…ISGK), 207–236 (ENFT…PKSD), 237–265 (LTVS…LEVK), 275–304 (EGIV…VVSP), 311–344 (GLKK…LVEV), 356–385 (NRIQ…LTDD), and 386–412 (EKLP…LLIK). Residues cysteine 9, cysteine 12, cysteine 15, and cysteine 19 each contribute to the [4Fe-4S] cluster site. [4Fe-4S] cluster is bound by residues cysteine 75, cysteine 78, cysteine 81, cysteine 85, cysteine 107, cysteine 110, cysteine 113, cysteine 117, cysteine 146, cysteine 149, cysteine 152, cysteine 156, cysteine 177, cysteine 180, cysteine 183, cysteine 187, cysteine 216, cysteine 219, cysteine 222, cysteine 226, cysteine 245, cysteine 248, cysteine 251, cysteine 255, cysteine 284, cysteine 287, cysteine 290, cysteine 294, cysteine 324, cysteine 327, cysteine 330, cysteine 334, cysteine 365, cysteine 368, cysteine 371, and cysteine 375.

It depends on [4Fe-4S] cluster as a cofactor.

This chain is Polyferredoxin protein MvhB (mvhB), found in Methanothermus fervidus.